We begin with the raw amino-acid sequence, 560 residues long: Oxygen-dependent choline dehydrogenase (560 aa).

8-37 (DYIIIGAGSAGNVLATRLTEDADVSVLLLE) is a binding site for FAD. H475 functions as the Proton acceptor in the catalytic mechanism.

This sequence belongs to the GMC oxidoreductase family. Requires FAD as cofactor.

It catalyses the reaction choline + A = betaine aldehyde + AH2. The enzyme catalyses betaine aldehyde + NAD(+) + H2O = glycine betaine + NADH + 2 H(+). Its pathway is amine and polyamine biosynthesis; betaine biosynthesis via choline pathway; betaine aldehyde from choline (cytochrome c reductase route): step 1/1. Its function is as follows. Involved in the biosynthesis of the osmoprotectant glycine betaine. Catalyzes the oxidation of choline to betaine aldehyde and betaine aldehyde to glycine betaine at the same rate. The polypeptide is Oxygen-dependent choline dehydrogenase (Stenotrophomonas maltophilia (strain K279a)).